A 121-amino-acid chain; its full sequence is Small ribosomal subunit protein uS12 (121 aa).

Positions 1–25 (MPTINQLVRKNRKQKKSQSKSPVLE) are disordered. Positions 9–18 (RKNRKQKKSQ) are enriched in basic residues. The residue at position 89 (Asp89) is a 3-methylthioaspartic acid.

The protein belongs to the universal ribosomal protein uS12 family. Part of the 30S ribosomal subunit. Contacts proteins S8 and S17. May interact with IF1 in the 30S initiation complex.

Functionally, with S4 and S5 plays an important role in translational accuracy. Its function is as follows. Interacts with and stabilizes bases of the 16S rRNA that are involved in tRNA selection in the A site and with the mRNA backbone. Located at the interface of the 30S and 50S subunits, it traverses the body of the 30S subunit contacting proteins on the other side and probably holding the rRNA structure together. The combined cluster of proteins S8, S12 and S17 appears to hold together the shoulder and platform of the 30S subunit. The sequence is that of Small ribosomal subunit protein uS12 from Rhodopirellula baltica (strain DSM 10527 / NCIMB 13988 / SH1).